The following is a 200-amino-acid chain: ATP synthase subunit delta', mitochondrial (200 aa).

A mitochondrion-targeting transit peptide spans 1–21 (MFRHSSRLLARATTMGWRRPF).

It belongs to the ATPase epsilon chain family. As to quaternary structure, F-type ATPases have 2 components, CF(1) - the catalytic core - and CF(0) - the membrane proton channel. CF(1) has five subunits: alpha(3), beta(3), gamma(1), delta(1), epsilon(1). CF(0) has three main subunits: a, b and c.

The protein resides in the mitochondrion. Its subcellular location is the mitochondrion inner membrane. In terms of biological role, mitochondrial membrane ATP synthase (F(1)F(0) ATP synthase or Complex V) produces ATP from ADP in the presence of a proton gradient across the membrane which is generated by electron transport complexes of the respiratory chain. F-type ATPases consist of two structural domains, F(1) - containing the extramembraneous catalytic core, and F(0) - containing the membrane proton channel, linked together by a central stalk and a peripheral stalk. During catalysis, ATP turnover in the catalytic domain of F(1) is coupled via a rotary mechanism of the central stalk subunits to proton translocation. Part of the complex F(1) domain and of the central stalk which is part of the complex rotary element. Rotation of the central stalk against the surrounding alpha(3)beta(3) subunits leads to hydrolysis of ATP in three separate catalytic sites on the beta subunits. The chain is ATP synthase subunit delta', mitochondrial from Ipomoea batatas (Sweet potato).